The chain runs to 245 residues: Probable phosphatase YcdX (245 aa).

Positions 7, 9, 15, 40, 73, 101, 131, 192, and 194 each coordinate Zn(2+).

Belongs to the PHP family. As to quaternary structure, homotrimer. Zn(2+) is required as a cofactor.

In Escherichia coli O127:H6 (strain E2348/69 / EPEC), this protein is Probable phosphatase YcdX.